We begin with the raw amino-acid sequence, 60 residues long: Potassium channel toxin alpha-KTx 3.16 (60 aa).

A signal peptide spans 1-23 (MKVFSAVLIILFVCSMIIGISEG). 3 disulfide bridges follow: Cys-30–Cys-50, Cys-36–Cys-55, and Cys-40–Cys-57.

This sequence belongs to the short scorpion toxin superfamily. Potassium channel inhibitor family. Alpha-KTx 03 subfamily. As to expression, expressed by the venom gland.

Its subcellular location is the secreted. In terms of biological role, potassium channel inhibitor. This Mesobuthus gibbosus (Mediterranean checkered scorpion) protein is Potassium channel toxin alpha-KTx 3.16.